The sequence spans 98 residues: Large ribosomal subunit protein uL23 (98 aa).

It belongs to the universal ribosomal protein uL23 family. As to quaternary structure, part of the 50S ribosomal subunit. Contacts protein L29, and trigger factor when it is bound to the ribosome.

Its function is as follows. One of the early assembly proteins it binds 23S rRNA. One of the proteins that surrounds the polypeptide exit tunnel on the outside of the ribosome. Forms the main docking site for trigger factor binding to the ribosome. The sequence is that of Large ribosomal subunit protein uL23 from Limosilactobacillus reuteri (strain DSM 20016) (Lactobacillus reuteri).